The primary structure comprises 142 residues: Transcriptional regulator MraZ (142 aa).

2 SpoVT-AbrB domains span residues 5–51 and 77–120; these read ASAL…PRPE and AMDV…DAQT.

Belongs to the MraZ family. As to quaternary structure, forms oligomers.

Its subcellular location is the cytoplasm. The protein resides in the nucleoid. The chain is Transcriptional regulator MraZ from Burkholderia mallei (strain NCTC 10247).